Here is a 122-residue protein sequence, read N- to C-terminus: SLMQFETLIMKIAGRSGIWYYGSYGCYCGAGGQGRPQDASDRCCFVHDCCYGKVTGCDPKLDVYTYTEENGAIVCGGDDPCKKQICECDKDAAICFRDNIDTYDNKYWFFPAKNCQEESEPC.

Intrachain disulfides connect Cys26-Cys115, Cys28-Cys44, Cys43-Cys95, Cys49-Cys122, Cys50-Cys88, Cys57-Cys81, and Cys75-Cys86. Positions 27, 29, and 31 each coordinate Ca(2+). His47 is a catalytic residue. Asp48 lines the Ca(2+) pocket. Residue Asp89 is part of the active site.

Belongs to the phospholipase A2 family. Group II subfamily. D49 sub-subfamily. Monomer. Ca(2+) serves as cofactor. Expressed by the venom gland.

It localises to the secreted. It carries out the reaction a 1,2-diacyl-sn-glycero-3-phosphocholine + H2O = a 1-acyl-sn-glycero-3-phosphocholine + a fatty acid + H(+). In terms of biological role, PLA2 catalyzes the calcium-dependent hydrolysis of the 2-acyl groups in 3-sn-phosphoglycerides. This Gloydius blomhoffii (Mamushi) protein is Acidic phospholipase A2.